The following is a 351-amino-acid chain: Fe(3+) ions import ATP-binding protein FbpC (351 aa).

Residues Val7 to Met237 enclose the ABC transporter domain. Position 39–46 (Gly39–Thr46) interacts with ATP.

The protein belongs to the ABC transporter superfamily. Fe(3+) ion importer (TC 3.A.1.10) family. As to quaternary structure, the complex is composed of two ATP-binding proteins (FbpC), two transmembrane proteins (FbpB) and a solute-binding protein (FbpA).

It is found in the cell inner membrane. The enzyme catalyses Fe(3+)(out) + ATP + H2O = Fe(3+)(in) + ADP + phosphate + H(+). Functionally, part of the ABC transporter complex FbpABC involved in Fe(3+) ions import. Responsible for energy coupling to the transport system. The chain is Fe(3+) ions import ATP-binding protein FbpC from Photobacterium profundum (strain SS9).